The chain runs to 58 residues: Mitochondrial import receptor subunit TOM7 homolog (58 aa).

At 1–16 (MKLSPATKSFIGKTVD) the chain is on the cytoplasmic side. A helical transmembrane segment spans residues 17–35 (ISTFAIQWGFVPFVVYLGF). At 36–58 (KKGAEPMPNGQILPLSAMSLLWG) the chain is on the mitochondrial intermembrane side.

It belongs to the Tom7 family. As to quaternary structure, forms part of the preprotein translocase complex of the outer mitochondrial membrane (TOM complex).

It localises to the mitochondrion outer membrane. The protein is Mitochondrial import receptor subunit TOM7 homolog (tomm-7) of Caenorhabditis elegans.